The following is a 374-amino-acid chain: Dispase autolysis-inducing protein (374 aa).

Residues methionine 1–alanine 26 form the signal peptide.

The protein resides in the secreted. Induces autolysis of dispase and thermolysin. The sequence is that of Dispase autolysis-inducing protein (daip) from Streptomyces mobaraensis (Streptoverticillium mobaraense).